We begin with the raw amino-acid sequence, 377 residues long: Alanine racemase (377 aa).

The active-site Proton acceptor; specific for D-alanine is K37. Position 37 is an N6-(pyridoxal phosphate)lysine (K37). R135 contributes to the substrate binding site. The active-site Proton acceptor; specific for L-alanine is Y271. Position 319 (M319) interacts with substrate.

Belongs to the alanine racemase family. Pyridoxal 5'-phosphate serves as cofactor.

It catalyses the reaction L-alanine = D-alanine. Its pathway is amino-acid biosynthesis; D-alanine biosynthesis; D-alanine from L-alanine: step 1/1. Catalyzes the interconversion of L-alanine and D-alanine. May also act on other amino acids. The chain is Alanine racemase (alr) from Helicobacter pylori (strain Shi470).